Consider the following 249-residue polypeptide: Elongator complex protein 6 homolog (249 aa).

The protein belongs to the ELP6 family. In terms of assembly, component of the elongator complex.

The protein resides in the cytoplasm. It is found in the nucleus. It functions in the pathway tRNA modification; 5-methoxycarbonylmethyl-2-thiouridine-tRNA biosynthesis. Functionally, component of the elongator complex which is required for multiple tRNA modifications, including mcm5U (5-methoxycarbonylmethyl uridine), mcm5s2U (5-methoxycarbonylmethyl-2-thiouridine), and ncm5U (5-carbamoylmethyl uridine). The elongator complex catalyzes formation of carboxymethyluridine in the wobble base at position 34 in tRNAs. The protein is Elongator complex protein 6 homolog of Schizosaccharomyces pombe (strain 972 / ATCC 24843) (Fission yeast).